Reading from the N-terminus, the 316-residue chain is MALYELFAHPVERGYRAGLCSKAALFLLLATALTYIPPLLVAFRSHGFWLKRSSYEEQPTVRFQHQVLLVALLGSEPGGFLAWSTFPAFNRLQEGHLRVPLVSAREEDRNQDGKMDMLHFKLELPLQSTEQVLGVQLILTFSYQLHRMSTFVMQSMAFLQSSFALPGSQLYVNGDLRLQQKQPLGYGGLDVRYNVSVINGTSPFASDYDLTRIVAAYQERNVTTILTDPSPIWLVGRAAEAPFVVNAVIRYPVEVISYLPGFWEMIKFAWIQYVSILLIFLWAFERIKRFVFQNQVVTTIPVTAMPQGELYKEHLS.

A helical membrane pass occupies residues 23–43; it reads AALFLLLATALTYIPPLLVAF. N-linked (GlcNAc...) asparagine glycans are attached at residues N194, N199, and N221. A helical membrane pass occupies residues 262–282; the sequence is FWEMIKFAWIQYVSILLIFLW.

This sequence belongs to the TMEM231 family. Part of the tectonic-like complex (also named B9 complex). Interacts with TMEM107.

It is found in the cell projection. The protein localises to the cilium membrane. Functionally, transmembrane component of the tectonic-like complex, a complex localized at the transition zone of primary cilia and acting as a barrier that prevents diffusion of transmembrane proteins between the cilia and plasma membranes. Required for ciliogenesis and sonic hedgehog/SHH signaling. This is Transmembrane protein 231 (TMEM231) from Bos taurus (Bovine).